We begin with the raw amino-acid sequence, 917 residues long: MRLSSSSGSVLPAQAASPEAVEEQKCLNSELWHACAGPLVSLPAVGSRVVYFPQGHSEQVAASTNKEMESQIPNYPNLPPQLICQLHNVTMHADAETDEVYAQMTLQPLSPQELKDPYLPAELGSANKQPTNYFCKTLTASDTSTHGGFSVPRRAAEKVFPPLDFTQQPPAQELIAKDLHGNEWKFRHIFRGQPKRHLLTTGWSVFVSAKRLVAGDSVLFIWNDNNQLLLGIRRANRPQTVMPSSVLSSDSMHIGLLAAAAHAASTNSRFTIFYNPRASPSEFVIPLSKYVKAVYHTRISVGMRFRMLFETEESSVRRYMGTITGISDLDAARWPNSHWRSVKVGWDESTAGERQPRVSLWEIEPLTTFPMYPSPFPLRLKRPWPTGLPSLHGGKDDDLTSSLMWLRDSANPGFQSLNFGGLGMNPWMQPRFDASLLGLQPDMYQTIAATAFQDPTKQVSPTILQFQQPQNIGGRANTLLPSQILQQVQPQFQQQQYLQNINETTIQGHAQSEFLQQQLQRCQSFTEQKPQLQTQQQQQESQQQQQQQSQCMQVPQHQQMQQQKNMTNYQSVPNALSPFSQLSSPSQSSPMTLQTVLPFSQPQSYPDTSMSSLSPSNTSTMHNALRPFSSEAPSHLSMPRPTAVPVPDPWSSKRVAVESLLPSRPQVTSQMEQLDSTAPSIPQSSALAPLPGRGCLVDQDGNSDPQNHLLFGVNIDSQSLLMQGGIPSLQGENDSTAIPYSTSNFLSPLQNDFPLDQTLSSADCLDESGYVPCSQNSDQVINRPPATFVKVYKSGTYGRSLDITRFSSYHELRRELGRLFGLEGQLENPLRSGWQLVFVDREDDVLLVGDDPWQEFVNSVSCIKILSPQEVQQMGKPFELLSSAPGKRLGSSCDDYVSRQESRSLSTGIASVGSVEF.

Positions 134–236 (FCKTLTASDT…QLLLGIRRAN (103 aa)) form a DNA-binding region, TF-B3. The disordered stretch occupies residues 571 to 649 (SVPNALSPFS…RPTAVPVPDP (79 aa)). Low complexity-rich tracts occupy residues 576 to 594 (LSPF…MTLQ) and 604 to 620 (SYPD…NTST). Residues 786–870 (ATFVKVYKSG…SCIKILSPQE (85 aa)) form the PB1 domain.

The protein belongs to the ARF family. As to quaternary structure, homodimers and heterodimers.

It localises to the nucleus. Its function is as follows. Auxin response factors (ARFs) are transcriptional factors that bind specifically to the DNA sequence 5'-TGTCTC-3' found in the auxin-responsive promoter elements (AuxREs). This Oryza sativa subsp. indica (Rice) protein is Auxin response factor 17 (ARF17).